We begin with the raw amino-acid sequence, 342 residues long: Nicotinate-nucleotide--dimethylbenzimidazole phosphoribosyltransferase (342 aa).

Glu311 acts as the Proton acceptor in catalysis.

This sequence belongs to the CobT family.

The catalysed reaction is 5,6-dimethylbenzimidazole + nicotinate beta-D-ribonucleotide = alpha-ribazole 5'-phosphate + nicotinate + H(+). It functions in the pathway nucleoside biosynthesis; alpha-ribazole biosynthesis; alpha-ribazole from 5,6-dimethylbenzimidazole: step 1/2. Its function is as follows. Catalyzes the synthesis of alpha-ribazole-5'-phosphate from nicotinate mononucleotide (NAMN) and 5,6-dimethylbenzimidazole (DMB). This Vibrio vulnificus (strain CMCP6) protein is Nicotinate-nucleotide--dimethylbenzimidazole phosphoribosyltransferase.